The primary structure comprises 497 residues: L-carnitine dehydrogenase/betainyl-CoA thioesterase (497 aa).

Positions 1–335 (MSFITKAACV…AKLWANARKP (335 aa)) are L-carnitine dehydrogenase. 11 to 16 (GGGVIG) lines the NAD(+) pocket. The interval 330–335 (ANARKP) is important for dehydrogenase activity. The segment at 336-497 (EADLGDVKPL…AGRFVGQKRA (162 aa)) is betainyl-CoA thioesterase.

In the N-terminal section; belongs to the 3-hydroxyacyl-CoA dehydrogenase family. L-carnitine dehydrogenase subfamily. The protein in the C-terminal section; belongs to the betainyl-CoA thioesterase family. Homodimer.

It is found in the cytoplasm. The enzyme catalyses carnitine + NAD(+) = 3-dehydrocarnitine + NADH + H(+). The catalysed reaction is N,N,N-trimethylglycyl-CoA + H2O = glycine betaine + CoA + H(+). It participates in amine and polyamine metabolism; carnitine metabolism. Functionally, catalyzes the NAD(+)-dependent oxidation of L-carnitine to 3-dehydrocarnitine. Probably also catalyzes the cleavage of betainyl-CoA (N,N,N-trimethylglycyl-CoA) into glycine betaine and coenzyme A. Despite a high similarity to 3-hydroxyacyl-CoA dehydrogenases, cannot dehydrogenate 3-hydroxybutylate and 3-hydroxybutyl-CoA. Is probably involved in a L-carnitine degradation pathway that allows Rhizobium sp. YS-240 to grow on L-carnitine as the sole source of carbon and nitrogen. The chain is L-carnitine dehydrogenase/betainyl-CoA thioesterase from Rhizobium sp.